A 1306-amino-acid polypeptide reads, in one-letter code: Contactin-associated protein-like 5 (1306 aa).

Positions 1-24 (MDSLPRLTSVLTLLFSGLWHLGLT) are cleaved as a signal peptide. Residues 25–1237 (ATNYNCDDPL…PLTNAVRSDS (1213 aa)) are Extracellular-facing. The F5/8 type C domain occupies 30-174 (CDDPLASLLS…IGMRVEVYGC (145 aa)). The cysteines at positions 30 and 174 are disulfide-linked. Laminin G-like domains are found at residues 180-360 (VADF…TFSC) and 367-544 (PITF…IDLC). 3 N-linked (GlcNAc...) asparagine glycosylation sites follow: asparagine 282, asparagine 355, and asparagine 496. Cysteine 329 and cysteine 360 form a disulfide bridge. Disulfide bonds link cysteine 512–cysteine 544, cysteine 550–cysteine 561, and cysteine 555–cysteine 570. Residues 546–583 (IKDRCLPNYCEHGGSCSQSWTTFYCNCSDTSYTGATCH) form the EGF-like 1 domain. N-linked (GlcNAc...) asparagine glycosylation occurs at asparagine 571. The cysteines at positions 572 and 582 are disulfide-linked. Positions 584-790 (NSIYEQSCEV…LRCYGDRRFW (207 aa)) constitute a Fibrinogen C-terminal domain. N-linked (GlcNAc...) asparagine glycosylation occurs at asparagine 622. Residues 791–956 (NAVSFYTEAS…KVTSGVRPGC (166 aa)) enclose the Laminin G-like 3 domain. Intrachain disulfides connect cysteine 929–cysteine 956, cysteine 960–cysteine 973, cysteine 967–cysteine 982, cysteine 984–cysteine 994, and cysteine 1164–cysteine 1199. The region spanning 957 to 995 (PGHCSSYGSICHNGGKCVEKHNGYLCDCTNSPYEGPFCK) is the EGF-like 2 domain. A Laminin G-like 4 domain is found at 1013–1199 (QEPYPVTKNI…VHGTLTESSC (187 aa)). A helical membrane pass occupies residues 1238-1258 (AVIGGVIAVVIFIIFCIIGIM). The Cytoplasmic segment spans residues 1259–1306 (TRFLYQHKQSHRTSQMKEKEYPENLDSSFRNEIDLQNTVSECKREYFI).

Belongs to the neurexin family.

It is found in the membrane. In terms of biological role, may play a role in the correct development and proper functioning of the peripheral and central nervous system and be involved in cell adhesion and intercellular communication. The polypeptide is Contactin-associated protein-like 5 (CNTNAP5) (Homo sapiens (Human)).